The following is a 166-amino-acid chain: Transcriptional repressor NrdR (166 aa).

A zinc finger spans residues 3-34 (CPFCGHDDTQVKDSRSTEDGVAIRRRRVCSAC). The 91-residue stretch at 49–139 (LSVTKADGRR…VYRDFREVEA (91 aa)) folds into the ATP-cone domain. The disordered stretch occupies residues 146–166 (DMKPIPGETDTPSPDDSQETP).

This sequence belongs to the NrdR family. Requires Zn(2+) as cofactor.

Functionally, negatively regulates transcription of bacterial ribonucleotide reductase nrd genes and operons by binding to NrdR-boxes. This is Transcriptional repressor NrdR from Gluconobacter oxydans (strain 621H) (Gluconobacter suboxydans).